Here is a 281-residue protein sequence, read N- to C-terminus: ATP synthase gamma chain (281 aa).

This sequence belongs to the ATPase gamma chain family. In terms of assembly, F-type ATPases have 2 components, CF(1) - the catalytic core - and CF(0) - the membrane proton channel. CF(1) has five subunits: alpha(3), beta(3), gamma(1), delta(1), epsilon(1). CF(0) has three main subunits: a, b and c.

It localises to the cell membrane. Functionally, produces ATP from ADP in the presence of a proton gradient across the membrane. The gamma chain is believed to be important in regulating ATPase activity and the flow of protons through the CF(0) complex. The chain is ATP synthase gamma chain from Desulfitobacterium hafniense (strain DSM 10664 / DCB-2).